Here is a 423-residue protein sequence, read N- to C-terminus: MPRAAPNSINATLNLSSSLGKTVHLPAPAATIFVADPTIADYQAPSNRTIFVFGKKFGRTSLFALDENGEALAELHVVVTQPIADLRAMLRDQVGDYPIHVSYTPRGAILSGTAPNAEVVDIAKRVTEQFLGDGAPIVNNIKVAGSLQVNLSVRVAEVSRSGLKALGINLSAFGQFGNFKVGVLNRGAGLGSATGSGGTAEIGFDNDAVSVGAVLDALAKEHIASVLAEPNLTAMSGETASFLAGGEFPIPVLQENGQTSVEFRRFGVSLEFVPTVLDNNLINIHVKPEVSELSLQGAVQVNGIAVPAVSTRRADTVVELASGQSFVIGGLIRRNVNNDISAFPWLGRIPILGALFRSSSFQKEESELVILVTPYIVRPGSNPNQMSAPTDRMAPALGTPPRARAAISTDAPSVKGDLGFIIE.

Positions 75–145 (LHVVVTQPIA…PIVNNIKVAG (71 aa)) constitute a BON domain.

The protein belongs to the bacterial secretin family.

Functionally, involved in the secretion of an unknown compound. This is an uncharacterized protein from Sinorhizobium fredii (strain NBRC 101917 / NGR234).